Consider the following 374-residue polypeptide: Ribonuclease D (374 aa).

The 166-residue stretch at 6 to 171 (IISTTEDLKK…RATRVILLSK (166 aa)) folds into the 3'-5' exonuclease domain. One can recognise an HRDC domain in the interval 213 to 292 (DRKSIGVAQE…ARALNKKEVD (80 aa)).

This sequence belongs to the RNase D family. The cofactor is a divalent metal cation.

The protein localises to the cytoplasm. The catalysed reaction is Exonucleolytic cleavage that removes extra residues from the 3'-terminus of tRNA to produce 5'-mononucleotides.. Functionally, exonuclease involved in the 3' processing of various precursor tRNAs. Initiates hydrolysis at the 3'-terminus of an RNA molecule and releases 5'-mononucleotides. This Desulfotalea psychrophila (strain LSv54 / DSM 12343) protein is Ribonuclease D.